A 350-amino-acid polypeptide reads, in one-letter code: Galactokinase (350 aa).

A substrate-binding site is contributed by 14 to 17 (EHTD). Residues serine 46 and 96-102 (GAGLSSS) contribute to the ATP site. Mg(2+) is bound by residues serine 102 and glutamate 134. Aspartate 146 acts as the Proton acceptor in catalysis. Tyrosine 196 contacts substrate.

The protein belongs to the GHMP kinase family. GalK subfamily.

The protein resides in the cytoplasm. The enzyme catalyses alpha-D-galactose + ATP = alpha-D-galactose 1-phosphate + ADP + H(+). Its pathway is carbohydrate metabolism; galactose metabolism. Its function is as follows. Catalyzes the transfer of the gamma-phosphate of ATP to D-galactose to form alpha-D-galactose-1-phosphate (Gal-1-P). This is Galactokinase from Thermotoga petrophila (strain ATCC BAA-488 / DSM 13995 / JCM 10881 / RKU-1).